The sequence spans 118 residues: MPRVKGGTVTRARRKKTIKLAKGYFGAKHTLYKVAKQQVMKSGQYAFRDRRQRKRDFRKLWITRINAAARQHDMSYSRLMNGLKKADININRKMLSEVAISDEKAFAELVSKAKEALK.

This sequence belongs to the bacterial ribosomal protein bL20 family.

Functionally, binds directly to 23S ribosomal RNA and is necessary for the in vitro assembly process of the 50S ribosomal subunit. It is not involved in the protein synthesizing functions of that subunit. In Staphylococcus haemolyticus (strain JCSC1435), this protein is Large ribosomal subunit protein bL20.